Here is a 300-residue protein sequence, read N- to C-terminus: GTPase Era (300 aa).

The region spanning 4-173 (KYGIVAIVGK…INTIKQYLHK (170 aa)) is the Era-type G domain. A G1 region spans residues 12–19 (GKPNVGKS). Position 12–19 (12–19 (GKPNVGKS)) interacts with GTP. The tract at residues 38 to 42 (QTTRN) is G2. The tract at residues 59–62 (DTPG) is G3. GTP is bound by residues 59–63 (DTPGF) and 122–125 (SKAE). A G4 region spans residues 122–125 (SKAE). The segment at 152–154 (ISA) is G5. Positions 204–282 (LNHEVPHGVG…SLTIFVKVEN (79 aa)) constitute a KH type-2 domain.

Belongs to the TRAFAC class TrmE-Era-EngA-EngB-Septin-like GTPase superfamily. Era GTPase family. In terms of assembly, monomer.

It is found in the cytoplasm. The protein resides in the cell membrane. An essential GTPase that binds both GDP and GTP, with rapid nucleotide exchange. Plays a role in 16S rRNA processing and 30S ribosomal subunit biogenesis and possibly also in cell cycle regulation and energy metabolism. This Ureaplasma urealyticum serovar 10 (strain ATCC 33699 / Western) protein is GTPase Era.